The primary structure comprises 298 residues: DDRGK domain-containing protein 1 (298 aa).

At 1-2 the chain is on the lumenal side; sequence ME. A helical membrane pass occupies residues 3–23; that stretch reads EIFALIVSMILIVAVIPLFFW. Residues 24-298 are Cytoplasmic-facing; the sequence is KRRRDARSRE…ISGMEEISVS (275 aa). The interval 31-155 is disordered; it reads SREEVAEPPQ…EEEKARQAKE (125 aa). The span at 101–155 shows a compositional bias: basic and acidic residues; that stretch reads KRQEREAQRQAEEATRESRNTKQDWYAEMRRKKDEEREAEELKLEEEEKARQAKE.

The protein belongs to the DDRGK1 family.

The protein resides in the endoplasmic reticulum membrane. Its function is as follows. Substrate adapter for ufmylation, the covalent attachment of the ubiquitin-like modifier UFM1 to substrate proteins. The chain is DDRGK domain-containing protein 1 from Arabidopsis thaliana (Mouse-ear cress).